Consider the following 393-residue polypeptide: Succinate--CoA ligase [ADP-forming] subunit beta (393 aa).

Residues 9–251 (KALFEKFGVL…LNEEDPKEIE (243 aa)) enclose the ATP-grasp domain. ATP is bound by residues lysine 46, 53-55 (GRG), serine 109, and glutamate 114. Mg(2+) is bound by residues asparagine 206 and aspartate 220. Residues asparagine 271 and 328–330 (GIM) each bind substrate.

Belongs to the succinate/malate CoA ligase beta subunit family. In terms of assembly, heterotetramer of two alpha and two beta subunits. Mg(2+) is required as a cofactor.

The catalysed reaction is succinate + ATP + CoA = succinyl-CoA + ADP + phosphate. The enzyme catalyses GTP + succinate + CoA = succinyl-CoA + GDP + phosphate. It functions in the pathway carbohydrate metabolism; tricarboxylic acid cycle; succinate from succinyl-CoA (ligase route): step 1/1. Its function is as follows. Succinyl-CoA synthetase functions in the citric acid cycle (TCA), coupling the hydrolysis of succinyl-CoA to the synthesis of either ATP or GTP and thus represents the only step of substrate-level phosphorylation in the TCA. The beta subunit provides nucleotide specificity of the enzyme and binds the substrate succinate, while the binding sites for coenzyme A and phosphate are found in the alpha subunit. The sequence is that of Succinate--CoA ligase [ADP-forming] subunit beta from Opitutus terrae (strain DSM 11246 / JCM 15787 / PB90-1).